Here is a 98-residue protein sequence, read N- to C-terminus: NADH-ubiquinone oxidoreductase chain 4L (98 aa).

Transmembrane regions (helical) follow at residues 1-21, 29-49, and 61-81; these read MSMV…GLLM, SLLC…MTIL, and IILL…LVMV.

Belongs to the complex I subunit 4L family. Core subunit of respiratory chain NADH dehydrogenase (Complex I) which is composed of 45 different subunits.

It is found in the mitochondrion inner membrane. It catalyses the reaction a ubiquinone + NADH + 5 H(+)(in) = a ubiquinol + NAD(+) + 4 H(+)(out). Core subunit of the mitochondrial membrane respiratory chain NADH dehydrogenase (Complex I) which catalyzes electron transfer from NADH through the respiratory chain, using ubiquinone as an electron acceptor. Part of the enzyme membrane arm which is embedded in the lipid bilayer and involved in proton translocation. The sequence is that of NADH-ubiquinone oxidoreductase chain 4L (MT-ND4L) from Otaria byronia (South American sea lion).